The following is an 872-amino-acid chain: Alanine--tRNA ligase (872 aa).

Positions 567, 571, 669, and 673 each coordinate Zn(2+).

It belongs to the class-II aminoacyl-tRNA synthetase family. The cofactor is Zn(2+).

Its subcellular location is the cytoplasm. It catalyses the reaction tRNA(Ala) + L-alanine + ATP = L-alanyl-tRNA(Ala) + AMP + diphosphate. In terms of biological role, catalyzes the attachment of alanine to tRNA(Ala) in a two-step reaction: alanine is first activated by ATP to form Ala-AMP and then transferred to the acceptor end of tRNA(Ala). Also edits incorrectly charged Ser-tRNA(Ala) and Gly-tRNA(Ala) via its editing domain. The protein is Alanine--tRNA ligase of Streptococcus pyogenes serotype M1.